We begin with the raw amino-acid sequence, 146 residues long: Hut operon positive regulatory protein (146 aa).

This sequence belongs to the HutP family. Homohexamer.

Functionally, antiterminator that binds to cis-acting regulatory sequences on the mRNA in the presence of histidine, thereby suppressing transcription termination and activating the hut operon for histidine utilization. In Bacillus anthracis (strain CDC 684 / NRRL 3495), this protein is Hut operon positive regulatory protein.